The chain runs to 117 residues: Probable prefoldin subunit 1 (117 aa).

Belongs to the prefoldin subunit beta family. In terms of assembly, heterohexamer of two PFD-alpha type and four PFD-beta type subunits. As to expression, expressed in the distal cell tip of developing embryos.

The protein localises to the cytoplasm. Its function is as follows. Binds specifically to cytosolic chaperonin (c-CPN) and transfers target proteins to it. Binds to nascent polypeptide chain and promotes folding in an environment in which there are many competing pathways for nonnative proteins. Has a role in gonadogenesis. The chain is Probable prefoldin subunit 1 (pfd-1) from Caenorhabditis elegans.